The chain runs to 281 residues: uncharacterized protein (281 aa).

This is an uncharacterized protein from Methanocaldococcus jannaschii (strain ATCC 43067 / DSM 2661 / JAL-1 / JCM 10045 / NBRC 100440) (Methanococcus jannaschii).